Reading from the N-terminus, the 488-residue chain is Malonate-semialdehyde dehydrogenase (488 aa).

Positions 150, 152, 176, 179, 180, 229, and 251 each coordinate NAD(+). The active-site Nucleophile is the cysteine 284. Glutamate 382 is an NAD(+) binding site.

This sequence belongs to the aldehyde dehydrogenase family. IolA subfamily. As to quaternary structure, homotetramer.

The catalysed reaction is 3-oxopropanoate + NAD(+) + CoA + H2O = hydrogencarbonate + acetyl-CoA + NADH + H(+). The enzyme catalyses 2-methyl-3-oxopropanoate + NAD(+) + CoA + H2O = propanoyl-CoA + hydrogencarbonate + NADH + H(+). Its pathway is polyol metabolism; myo-inositol degradation into acetyl-CoA; acetyl-CoA from myo-inositol: step 7/7. Functionally, catalyzes the oxidation of malonate semialdehyde (MSA) and methylmalonate semialdehyde (MMSA) into acetyl-CoA and propanoyl-CoA, respectively. Is involved in a myo-inositol catabolic pathway. Bicarbonate, and not CO2, is the end-product of the enzymatic reaction. This is Malonate-semialdehyde dehydrogenase from Listeria monocytogenes serotype 4b (strain F2365).